The primary structure comprises 40 residues: Putative protein FAM86JP (40 aa).

Residues 1–40 are disordered; the sequence is MPGAFSQNSSKRRAVLPRSHRVAGRGPAEAGCLPGAPAGS. Positions 10-23 are enriched in basic residues; that stretch reads SKRRAVLPRSHRVA.

In Homo sapiens (Human), this protein is Putative protein FAM86JP.